The chain runs to 32 residues: Islet amyloid polypeptide (32 aa).

This sequence belongs to the calcitonin family. Can form homodimers. Interacts with IDE and INS. Interaction with INS inhibits homodimerization and fibril formation.

The protein localises to the secreted. Its function is as follows. Amylin/IAPP is a glucoregulatory peptide hormone that plays an important role in the regulation of energy homeostasis. Selectively inhibits insulin-stimulated glucose utilization and glycogen deposition in muscle, while not affecting adipocyte glucose metabolism. IAPP function is mediated by the CALCR-RAMPs (AMYRs) receptor complexes. Amylin can also bind CALCR receptor in the absence of RAMPs, although it is more selective for AMYRs. This Ovis aries (Sheep) protein is Islet amyloid polypeptide (IAPP).